Here is a 335-residue protein sequence, read N- to C-terminus: NmrA-like family domain-containing oxidoreductase ptmS (335 aa).

Residues 12–17, 39–43, 60–61, 81–88, Lys139, and 163–166 each bind NADP(+); these read GATGNQ, RDPNS, DG, INSDDPVF, and FLEN. The segment at 161–206 is interaction with ASS1; the sequence is GYFLENFLFKQGAFIMGGFPWETDAEGYLTWKVPYWGGEEQIPFLS.

It belongs to the NmrA-type oxidoreductase family.

Its pathway is secondary metabolite biosynthesis. Its function is as follows. NmrA-like family domain-containing oxidoreductase; part of the gene cluster that mediates the biosynthesis of the indole diterpenes penitrems. The geranylgeranyl diphosphate (GGPP) synthase ptmG catalyzes the first step in penitrem biosynthesis via conversion of farnesyl pyrophosphate and isopentyl pyrophosphate into geranylgeranyl pyrophosphate (GGPP). Condensation of indole-3-glycerol phosphate with GGPP by the prenyl transferase ptmC then forms 3-geranylgeranylindole (3-GGI). Epoxidation by the FAD-dependent monooxygenase ptmM leads to a epoxidized-GGI that is substrate of the terpene cyclase ptmB for cyclization to yield paspaline. Paspaline is subsequently converted to 13-desoxypaxilline by the cytochrome P450 monooxygenase ptmP, the latter being then converted to paxilline by the cytochrome P450 monooxygenase ptmQ. Paxilline is converted to beta-paxitriol via C-10 ketoreduction by the short-chain dehydrogenase ptmH which can be monoprenylated at the C-20 by the indole diterpene prenyltransferase ptmD. A two-step elimination (acetylation and elimination) process performed by the O-acetyltransferase ptmV and ptmI leads to the production of the prenylated form of penijanthine. The FAD-linked oxidoreductase ptmO then converts the prenylated form of penijanthine into PC-M5 which is in turn transformed into PC-M4 by the aromatic dimethylallyltransferase ptmE. Five sequential oxidative transformations performed by the cytochrome P450 monooxygenases ptmK, ptmU, ptmL, ptmN and ptmJ yield the various penitrem compounds. PtmK, ptmU and ptmM are involved in the formation of the key bicyclic ring of penitrem C via the formation of the intermediates secopenitrem D and penitrem D. PtmL catalyzes the epoxidation of penitrem D and C to yield penitrem B and F, respectively. PtmJ catalyzes the last benzylic hydroxylation to convert penitrem B to prenitrem E and penitrem F to penitrem A. In Penicillium ochrochloron, this protein is NmrA-like family domain-containing oxidoreductase ptmS.